We begin with the raw amino-acid sequence, 478 residues long: Zinc finger C3HC-type protein 1-like (478 aa).

The segment at 93–147 (CAKYGWSNIECDMLKCSSCNAYLCASLQPVLDFSKYKQRCVELQEALRKAHEKFC) adopts a C3HC-type zinc-finger fold. Residues 285–389 (LSAPNTPVSP…SSSSDTSPRG (105 aa)) are disordered. Polar residues predominate over residues 351–363 (SMGQGESSGLSNE). Residues 377–388 (LCSSSSSDTSPR) show a composition bias toward low complexity.

Phosphorylated. May also be weakly phosphorylated on Tyr residues.

It is found in the nucleus. It localises to the nucleus envelope. Its function is as follows. Required for proper positioning of a substantial amount of TPR at the nuclear basket (NB) through interaction with TPR. This is Zinc finger C3HC-type protein 1-like (zc3hc1) from Xenopus tropicalis (Western clawed frog).